Here is a 92-residue protein sequence, read N- to C-terminus: Small ribosomal subunit protein uS19 (92 aa).

Belongs to the universal ribosomal protein uS19 family.

Protein S19 forms a complex with S13 that binds strongly to the 16S ribosomal RNA. This Mycoplasmopsis synoviae (strain 53) (Mycoplasma synoviae) protein is Small ribosomal subunit protein uS19.